The primary structure comprises 49 residues: Large ribosomal subunit protein bL33 (49 aa).

Belongs to the bacterial ribosomal protein bL33 family.

The polypeptide is Large ribosomal subunit protein bL33 (Moorella thermoacetica (strain ATCC 39073 / JCM 9320)).